Consider the following 232-residue polypeptide: Sugar fermentation stimulation protein homolog (232 aa).

Belongs to the SfsA family.

In Geobacter sulfurreducens (strain ATCC 51573 / DSM 12127 / PCA), this protein is Sugar fermentation stimulation protein homolog.